A 216-amino-acid chain; its full sequence is Cytochrome c biogenesis ATP-binding export protein CcmA (216 aa).

One can recognise an ABC transporter domain in the interval 2–215 (LSVEELSCVR…SNHLRKIKLG (214 aa)). Residue 34–41 (GHNGAGKT) coordinates ATP.

This sequence belongs to the ABC transporter superfamily. CcmA exporter (TC 3.A.1.107) family. As to quaternary structure, the complex is composed of two ATP-binding proteins (CcmA) and two transmembrane proteins (CcmB).

It localises to the cell inner membrane. The enzyme catalyses heme b(in) + ATP + H2O = heme b(out) + ADP + phosphate + H(+). Its function is as follows. Part of the ABC transporter complex CcmAB involved in the biogenesis of c-type cytochromes; once thought to export heme, this seems not to be the case, but its exact role is uncertain. Responsible for energy coupling to the transport system. The protein is Cytochrome c biogenesis ATP-binding export protein CcmA of Photobacterium profundum (strain SS9).